Consider the following 891-residue polypeptide: Tubulin polyglutamylase TTLL6 (891 aa).

Disordered stretches follow at residues 1-25 (MGAL…SSPA) and 44-106 (SQAR…KRKK). Residues 63–76 (SEEKGDSSKEDPKE) are compositionally biased toward basic and acidic residues. Positions 88 to 99 (GAQNGLQNAQQQ) are enriched in low complexity. The 344-residue stretch at 106–449 (KKRLVINLSS…ESCDKKKVLE (344 aa)) folds into the TTL domain. ATP contacts are provided by residues lysine 223, 229–230 (QG), 251–254 (QLYI), and 264–266 (KFD). Glutamine 229 serves as a coordination point for a protein. L-glutamate is bound at residue arginine 290. 312-313 (TN) is an ATP binding site. Residues tyrosine 314, serine 315, and lysine 332 each coordinate L-glutamate. Residues aspartate 395, glutamate 408, and asparagine 410 each coordinate Mg(2+). Histidine 411 is a binding site for a protein. Residues 420 to 499 (RLDKEVKDGL…CGGFRLIYPS (80 aa)) form a c-MTBD region region. Lysine 426 serves as a coordination point for L-glutamate. Disordered regions lie at residues 546-584 (QMKK…ATQA), 607-636 (GERK…LTSA), 687-711 (TTPE…TASS), and 800-820 (NNLS…DSSG). The span at 687-699 (TTPESTTQLSISP) shows a compositional bias: polar residues.

Belongs to the tubulin--tyrosine ligase family. Found in a complex with CEP41. Mg(2+) serves as cofactor.

It is found in the cytoplasm. It localises to the cytoskeleton. Its subcellular location is the cilium axoneme. The protein resides in the cilium basal body. The catalysed reaction is L-glutamyl-[protein] + L-glutamate + ATP = gamma-L-glutamyl-L-glutamyl-[protein] + ADP + phosphate + H(+). The enzyme catalyses (L-glutamyl)(n)-gamma-L-glutamyl-L-glutamyl-[protein] + L-glutamate + ATP = (L-glutamyl)(n+1)-gamma-L-glutamyl-L-glutamyl-[protein] + ADP + phosphate + H(+). Its function is as follows. Polyglutamylase which modifies both tubulin and non-tubulin proteins, generating alpha-linked polyglutamate side chains on the gamma-carboxyl group of specific glutamate residues of target proteins. Preferentially mediates ATP-dependent long polyglutamate chain elongation over the initiation step of the polyglutamylation reaction. Preferentially modifies the alpha-tubulin tail over a beta-tail. Promotes tubulin polyglutamylation which stimulates spastin/SPAST-mediated microtubule severing, thereby regulating microtubule functions. Mediates microtubule polyglutamylation in primary cilia axoneme, which is important for ciliary structural formation and motility. Mediates microtubule polyglutamylation in motile cilia, necessary for the regulation of ciliary coordinated beating. Polyglutamylates non-tubulin protein nucleotidyltransferase CGAS, leading to CGAS DNA-binding inhibition, thereby preventing antiviral defense response. This is Tubulin polyglutamylase TTLL6 from Homo sapiens (Human).